Here is a 365-residue protein sequence, read N- to C-terminus: Aminomethyltransferase (365 aa).

The protein belongs to the GcvT family. The glycine cleavage system is composed of four proteins: P, T, L and H.

The catalysed reaction is N(6)-[(R)-S(8)-aminomethyldihydrolipoyl]-L-lysyl-[protein] + (6S)-5,6,7,8-tetrahydrofolate = N(6)-[(R)-dihydrolipoyl]-L-lysyl-[protein] + (6R)-5,10-methylene-5,6,7,8-tetrahydrofolate + NH4(+). The glycine cleavage system catalyzes the degradation of glycine. This Frankia alni (strain DSM 45986 / CECT 9034 / ACN14a) protein is Aminomethyltransferase.